The sequence spans 400 residues: S-adenosylmethionine sensor upstream of mTORC1 (400 aa).

Residues Arg99, Gly168, Asp186, Asp198, Phe199, and Ser240 each coordinate S-adenosyl-L-methionine.

This sequence belongs to the BMT2/SAMTOR family. In terms of assembly, interacts with the GATOR1 complex; interaction is disrupted when samtor binds S-adenosyl-L-methionine. Interacts with the KICSTOR complex; interaction is disrupted when samtor binds S-adenosyl-L-methionine.

S-adenosyl-L-methionine-binding protein that acts as an inhibitor of mTORC1 signaling via interaction with the GATOR1 and KICSTOR complexes. Acts as a sensor of S-adenosyl-L-methionine to signal methionine sufficiency to mTORC1: in presence of methionine, binds S-adenosyl-L-methionine, leading to disrupt interaction with the GATOR1 and KICSTOR complexes and promote mTORC1 signaling. Upon methionine starvation, S-adenosyl-L-methionine levels are reduced, thereby promoting the association with GATOR1 and KICSTOR, leading to inhibit mTORC1 signaling. Probably also acts as a S-adenosyl-L-methionine-dependent methyltransferase. In Xenopus tropicalis (Western clawed frog), this protein is S-adenosylmethionine sensor upstream of mTORC1.